The following is a 456-amino-acid chain: Adenylosuccinate synthetase isozyme 1 (456 aa).

The tract at residues 1 to 30 (MSSGWSQNDHRSYSNPPPVSGKRPRNDSGN) is disordered. Residues 41-47 (GDEGKGK) and 69-71 (GHT) contribute to the GTP site. D42 (proton acceptor) is an active-site residue. Mg(2+) contacts are provided by D42 and G69. Substrate is bound at residue D42. IMP contacts are provided by residues 42 to 45 (DEGK) and 67 to 70 (NAGH). The Proton donor role is filled by H70. S130 bears the Phosphoserine mark. Residues T162, R176, N255, T270, and R334 each coordinate IMP. 330-336 (VTTGRKR) serves as a coordination point for substrate. GTP contacts are provided by residues R336, 362 to 364 (KLD), and 444 to 447 (GVGK).

This sequence belongs to the adenylosuccinate synthetase family. As to quaternary structure, homodimer. Mg(2+) serves as cofactor.

Its subcellular location is the cytoplasm. It catalyses the reaction IMP + L-aspartate + GTP = N(6)-(1,2-dicarboxyethyl)-AMP + GDP + phosphate + 2 H(+). The protein operates within purine metabolism; AMP biosynthesis via de novo pathway; AMP from IMP: step 1/2. Component of the purine nucleotide cycle (PNC), which interconverts IMP and AMP to regulate the nucleotide levels in various tissues, and which contributes to glycolysis and ammoniagenesis. Catalyzes the first committed step in the biosynthesis of AMP from IMP. The sequence is that of Adenylosuccinate synthetase isozyme 1 (adss1) from Danio rerio (Zebrafish).